Consider the following 234-residue polypeptide: Large ribosomal subunit protein uL1 (234 aa).

It belongs to the universal ribosomal protein uL1 family. As to quaternary structure, part of the 50S ribosomal subunit.

Binds directly to 23S rRNA. The L1 stalk is quite mobile in the ribosome, and is involved in E site tRNA release. In terms of biological role, protein L1 is also a translational repressor protein, it controls the translation of the L11 operon by binding to its mRNA. The sequence is that of Large ribosomal subunit protein uL1 from Sulfurovum sp. (strain NBC37-1).